The chain runs to 138 residues: Basic phospholipase A2 homolog bothropstoxin-II (138 aa).

The signal sequence occupies residues Met1–Gly16. Cystine bridges form between Cys42-Cys131, Cys44-Cys60, Cys59-Cys111, Cys65-Cys138, Cys66-Cys104, Cys73-Cys97, and Cys91-Cys102. The interval Lys121–Lys133 is important for membrane-damaging activities in eukaryotes and bacteria; heparin-binding.

It belongs to the phospholipase A2 family. Group II subfamily. D49 sub-subfamily. In terms of assembly, homodimer; non-covalently linked (probable alternative/compact dimer conformation). In terms of tissue distribution, expressed by the venom gland.

Its subcellular location is the secreted. In terms of biological role, snake venom phospholipase A2 (PLA2) that shows low enzymatic activity even tough it conserves the catalytic residues. Shows a strong myotoxic activity and induces indirect hemolysis, anticoagulant properties, and cytotoxic activities. In vivo, it induces muscle necrosis, accompanied by polymorphonuclear cell infiltration, and edema in the mouse paw. It exerts its function even in the absence of extracellular calcium, indicating it is not a calcium-dependent enzyme. A model of myotoxic mechanism has been proposed: an apo Lys49-PLA2 is activated by the entrance of a hydrophobic molecule (e.g. fatty acid) at the hydrophobic channel of the protein leading to a reorientation of a monomer. This reorientation causes a transition between 'inactive' to 'active' states, causing alignment of C-terminal and membrane-docking sites (MDoS) side-by-side and putting the membrane-disruption sites (MDiS) in the same plane, exposed to solvent and in a symmetric position for both monomers. The MDoS region stabilizes the toxin on membrane by the interaction of charged residues with phospholipid head groups. Subsequently, the MDiS region destabilizes the membrane with penetration of hydrophobic residues. This insertion causes a disorganization of the membrane, allowing an uncontrolled influx of ions (i.e. calcium and sodium), and eventually triggering irreversible intracellular alterations and cell death. This chain is Basic phospholipase A2 homolog bothropstoxin-II, found in Bothrops jararacussu (Jararacussu).